A 223-amino-acid polypeptide reads, in one-letter code: Endonuclease NucS (223 aa).

Belongs to the NucS endonuclease family.

The protein localises to the cytoplasm. Cleaves both 3' and 5' ssDNA extremities of branched DNA structures. This is Endonuclease NucS from Mycobacterium marinum (strain ATCC BAA-535 / M).